Reading from the N-terminus, the 585-residue chain is Aspartate--tRNA ligase (585 aa).

Residue E169 coordinates L-aspartate. The interval 193 to 196 (QLFK) is aspartate. R215 provides a ligand contact to L-aspartate. ATP-binding positions include 215–217 (RDE) and Q224. H443 is a binding site for L-aspartate. E478 provides a ligand contact to ATP. R485 provides a ligand contact to L-aspartate. 530 to 533 (GLDR) contacts ATP.

It belongs to the class-II aminoacyl-tRNA synthetase family. Type 1 subfamily. As to quaternary structure, homodimer.

Its subcellular location is the cytoplasm. The catalysed reaction is tRNA(Asp) + L-aspartate + ATP = L-aspartyl-tRNA(Asp) + AMP + diphosphate. Its function is as follows. Catalyzes the attachment of L-aspartate to tRNA(Asp) in a two-step reaction: L-aspartate is first activated by ATP to form Asp-AMP and then transferred to the acceptor end of tRNA(Asp). This is Aspartate--tRNA ligase from Pseudothermotoga lettingae (strain ATCC BAA-301 / DSM 14385 / NBRC 107922 / TMO) (Thermotoga lettingae).